The sequence spans 254 residues: UPF0246 protein CPR_2119 (254 aa).

It belongs to the UPF0246 family.

The sequence is that of UPF0246 protein CPR_2119 from Clostridium perfringens (strain SM101 / Type A).